The chain runs to 365 residues: NAD(P)H-quinone oxidoreductase subunit 1, chloroplastic (365 aa).

The next 6 helical transmembrane spans lie at 29–49, 106–126, 129–149, 250–270, 302–322, and 338–358; these read IWLLVPIFTLILVIIIGVLVI, IAVISTLLSYLVIPFGYHLVL, LSIGVFLWIAISSIAPIGLLM, YSGIKFGLFYVASYLNLLVSS, IFGMTIGILITLAKAYLFLFI, and LLNLGWKFLLPISLGNLLLTT.

Belongs to the complex I subunit 1 family. As to quaternary structure, NDH is composed of at least 16 different subunits, 5 of which are encoded in the nucleus.

The protein localises to the plastid. Its subcellular location is the chloroplast thylakoid membrane. The enzyme catalyses a plastoquinone + NADH + (n+1) H(+)(in) = a plastoquinol + NAD(+) + n H(+)(out). It carries out the reaction a plastoquinone + NADPH + (n+1) H(+)(in) = a plastoquinol + NADP(+) + n H(+)(out). In terms of biological role, NDH shuttles electrons from NAD(P)H:plastoquinone, via FMN and iron-sulfur (Fe-S) centers, to quinones in the photosynthetic chain and possibly in a chloroplast respiratory chain. The immediate electron acceptor for the enzyme in this species is believed to be plastoquinone. Couples the redox reaction to proton translocation, and thus conserves the redox energy in a proton gradient. The sequence is that of NAD(P)H-quinone oxidoreductase subunit 1, chloroplastic from Acorus calamus (Sweet flag).